Here is a 616-residue protein sequence, read N- to C-terminus: Chaperone protein HscA (616 aa).

Belongs to the heat shock protein 70 family.

Its function is as follows. Chaperone involved in the maturation of iron-sulfur cluster-containing proteins. Has a low intrinsic ATPase activity which is markedly stimulated by HscB. Involved in the maturation of IscU. This Escherichia coli (strain SMS-3-5 / SECEC) protein is Chaperone protein HscA.